A 164-amino-acid polypeptide reads, in one-letter code: MQRIALYPGSFDPVTNGHLDVVRQAVHLCDRLIVAVGVHHGKKPLFSTEERLAMVHEVLEPVAAAAGCGFEASTYDDLTVTAAQKAGAIMMIRGLRDGTDFDYEMQLAGMNQTMVPGIQTVFVPASVAVRPIAATLVRQIAAMGGDVSHFVPAAVAASLKAKFN.

Serine 10 provides a ligand contact to substrate. ATP is bound by residues 10-11 (SF) and histidine 18. Positions 42, 79, and 93 each coordinate substrate. Residues 94 to 96 (GLR), glutamate 104, and 129 to 135 (VRPIAAT) contribute to the ATP site.

The protein belongs to the bacterial CoaD family. As to quaternary structure, homohexamer. The cofactor is Mg(2+).

The protein localises to the cytoplasm. The catalysed reaction is (R)-4'-phosphopantetheine + ATP + H(+) = 3'-dephospho-CoA + diphosphate. It participates in cofactor biosynthesis; coenzyme A biosynthesis; CoA from (R)-pantothenate: step 4/5. Reversibly transfers an adenylyl group from ATP to 4'-phosphopantetheine, yielding dephospho-CoA (dPCoA) and pyrophosphate. In Bradyrhizobium sp. (strain BTAi1 / ATCC BAA-1182), this protein is Phosphopantetheine adenylyltransferase.